The sequence spans 100 residues: Acylphosphatase (100 aa).

One can recognise an Acylphosphatase-like domain in the interval 14 to 100; it reads RWRFFVEGKV…TGADWFEIRS (87 aa). Catalysis depends on residues arginine 29 and asparagine 47.

Belongs to the acylphosphatase family.

It catalyses the reaction an acyl phosphate + H2O = a carboxylate + phosphate + H(+). This is Acylphosphatase (acyP) from Synechococcus sp. (strain WH7803).